Reading from the N-terminus, the 309-residue chain is General transcription factor IIH subunit 3 (309 aa).

Residues 269 to 286 form a C4-type zinc finger; it reads CSVCLSIFCNFSPICTTC.

Belongs to the TFB4 family. In terms of assembly, part of a TFIID-containing RNA polymerase II pre-initiation complex that is composed of TBP and at least GTF2A1, GTF2A2, GTF2E1, GTF2E2, GTF2F1, GTF2H2, GTF2H3, GTF2H4, GTF2H5, GTF2B, TCEA1, ERCC2, ERCC3, TAF1, TAF2, TAF3, TAF4, TAF5, TAF6, TAF7, TAF8, TAF9, TAF10, TAF11, TAF12 and TAF13. Component of the 7-subunit TFIIH core complex composed of XPB/ERCC3, XPD/ERCC2, GTF2H1, GTF2H2, GTF2H3, GTF2H4 and GTF2H5, which is active in NER. The core complex associates with the 3-subunit CDK-activating kinase (CAK) module composed of CCNH/cyclin H, CDK7 and MNAT1 to form the 10-subunit holoenzyme (holo-TFIIH) active in transcription. Interacts with RARA; the interaction requires prior phosphorylation of RARA on 'Ser-369' which then enhances interaction of RARA with CDK7.

The protein localises to the nucleus. Its function is as follows. Component of the general transcription and DNA repair factor IIH (TFIIH) core complex, which is involved in general and transcription-coupled nucleotide excision repair (NER) of damaged DNA and, when complexed to CAK, in RNA transcription by RNA polymerase II. In NER, TFIIH acts by opening DNA around the lesion to allow the excision of the damaged oligonucleotide and its replacement by a new DNA fragment. In transcription, TFIIH has an essential role in transcription initiation. When the pre-initiation complex (PIC) has been established, TFIIH is required for promoter opening and promoter escape. Phosphorylation of the C-terminal tail (CTD) of the largest subunit of RNA polymerase II by the kinase module CAK controls the initiation of transcription. In Mus musculus (Mouse), this protein is General transcription factor IIH subunit 3 (Gtf2h3).